Here is a 334-residue protein sequence, read N- to C-terminus: MAFNLRNRNFLKLLDFTPREIQYMIDLAIDLKKAKYGGYERKHLTGKNIALIFEKTSTRTRCAFEVAAFDQGAQVSYLGPSGSQIGHKESMKDTARVLGRMYDGIEYRGYGQEIVEELGAYAGVPVWNGLTNEFHPTQILADFMTMLEHGKGKRLDQIKFAYLGDARNNMGNSLMVGAAKMGMDIRLVAPKAFWPEEDLVAKCRLIAEETGARITLTEDVKEGVLGADFLYTDVWVSMGEAKEAWDQRVKLMTPYQVNMDVINATKNPDVKFMHCLPAFHNDETTMGKEVADKYGMKGLEVTEDVFESEHSIVFDEAENRMHTIKAVMVATLGD.

Carbamoyl phosphate-binding positions include 57-60 (STRT), glutamine 84, arginine 108, and 135-138 (HPTQ). Residues asparagine 169, aspartate 233, and 237 to 238 (SM) contribute to the L-ornithine site. Carbamoyl phosphate is bound by residues 275-276 (CL) and arginine 320.

Belongs to the aspartate/ornithine carbamoyltransferase superfamily. OTCase family.

It localises to the cytoplasm. The enzyme catalyses carbamoyl phosphate + L-ornithine = L-citrulline + phosphate + H(+). The protein operates within amino-acid biosynthesis; L-arginine biosynthesis; L-arginine from L-ornithine and carbamoyl phosphate: step 1/3. Functionally, reversibly catalyzes the transfer of the carbamoyl group from carbamoyl phosphate (CP) to the N(epsilon) atom of ornithine (ORN) to produce L-citrulline. The sequence is that of Ornithine carbamoyltransferase from Aeromonas hydrophila subsp. hydrophila (strain ATCC 7966 / DSM 30187 / BCRC 13018 / CCUG 14551 / JCM 1027 / KCTC 2358 / NCIMB 9240 / NCTC 8049).